The chain runs to 219 residues: Proteasome subunit beta (219 aa).

Residues 1-14 (MISGSEYHKEYMKG) constitute a propeptide, removed in mature form; by autocatalysis. Residue Thr15 is the Nucleophile of the active site.

The protein belongs to the peptidase T1B family. The 20S proteasome core is composed of 14 alpha and 14 beta subunits that assemble into four stacked heptameric rings, resulting in a barrel-shaped structure. The two inner rings, each composed of seven catalytic beta subunits, are sandwiched by two outer rings, each composed of seven alpha subunits. The catalytic chamber with the active sites is on the inside of the barrel. Has a gated structure, the ends of the cylinder being occluded by the N-termini of the alpha-subunits. Is capped at one or both ends by the proteasome regulatory ATPase, PAN.

It localises to the cytoplasm. The enzyme catalyses Cleavage of peptide bonds with very broad specificity.. With respect to regulation, the formation of the proteasomal ATPase PAN-20S proteasome complex, via the docking of the C-termini of PAN into the intersubunit pockets in the alpha-rings, triggers opening of the gate for substrate entry. Interconversion between the open-gate and close-gate conformations leads to a dynamic regulation of the 20S proteasome proteolysis activity. Its function is as follows. Component of the proteasome core, a large protease complex with broad specificity involved in protein degradation. The protein is Proteasome subunit beta of Methanococcus vannielii (strain ATCC 35089 / DSM 1224 / JCM 13029 / OCM 148 / SB).